A 69-amino-acid chain; its full sequence is Fumarase D (69 aa).

Belongs to the FumD family.

It catalyses the reaction (S)-malate = fumarate + H2O. In vitro catalyzes the addition of water to fumarate, forming malate. Cannot catalyze the reverse reaction. Cannot use the cis-isomer maleate as substrate. This is Fumarase D from Shigella flexneri.